A 274-amino-acid chain; its full sequence is NH(3)-dependent NAD(+) synthetase (274 aa).

ATP is bound at residue 46-53 (GISGGQDS). Aspartate 52 is a Mg(2+) binding site. Arginine 140 serves as a coordination point for deamido-NAD(+). Threonine 160 lines the ATP pocket. Glutamate 165 provides a ligand contact to Mg(2+). Deamido-NAD(+) is bound by residues lysine 173 and aspartate 180. Lysine 189 and threonine 211 together coordinate ATP. 260–261 (HK) provides a ligand contact to deamido-NAD(+).

Belongs to the NAD synthetase family. In terms of assembly, homodimer.

It carries out the reaction deamido-NAD(+) + NH4(+) + ATP = AMP + diphosphate + NAD(+) + H(+). Its pathway is cofactor biosynthesis; NAD(+) biosynthesis; NAD(+) from deamido-NAD(+) (ammonia route): step 1/1. In terms of biological role, catalyzes the ATP-dependent amidation of deamido-NAD to form NAD. Uses ammonia as a nitrogen source. This Streptococcus pyogenes serotype M2 (strain MGAS10270) protein is NH(3)-dependent NAD(+) synthetase.